We begin with the raw amino-acid sequence, 290 residues long: Protein 3 (290 aa).

This Lettuce big-vein associated virus (isolate Japan/Kagawa) (LBVaV) protein is Protein 3.